The primary structure comprises 257 residues: Type III pantothenate kinase (257 aa).

6–13 (DSGNTNTV) serves as a coordination point for ATP. 108–111 (GADR) contacts substrate. The active-site Proton acceptor is the Asp110. Residue Asp130 coordinates K(+). Residue Thr133 participates in ATP binding. Thr185 contacts substrate.

It belongs to the type III pantothenate kinase family. Homodimer. It depends on NH4(+) as a cofactor. K(+) is required as a cofactor.

The protein localises to the cytoplasm. The catalysed reaction is (R)-pantothenate + ATP = (R)-4'-phosphopantothenate + ADP + H(+). Its pathway is cofactor biosynthesis; coenzyme A biosynthesis; CoA from (R)-pantothenate: step 1/5. In terms of biological role, catalyzes the phosphorylation of pantothenate (Pan), the first step in CoA biosynthesis. This is Type III pantothenate kinase from Rhodospirillum rubrum (strain ATCC 11170 / ATH 1.1.1 / DSM 467 / LMG 4362 / NCIMB 8255 / S1).